The primary structure comprises 74 residues: Kappa-stichotoxin-Hmg1a (74 aa).

The first 22 residues, 1-22 (MKSQMIAAVLLIAFCLCVVVTA), serve as a signal peptide directing secretion. Positions 23–39 (RMELQDVEDMENGFQKR) are excised as a propeptide. In terms of domain architecture, ShKT spans 42–74 (CKDLIPVSECTDIRCRTSMKYRLNLCRKTCGSC). 3 disulfide bridges follow: Cys42–Cys74, Cys51–Cys67, and Cys56–Cys71.

Belongs to the sea anemone type 1 potassium channel toxin family. Type 1a subfamily.

Its subcellular location is the secreted. The protein resides in the nematocyst. Functionally, potently blocks the voltage-gated potassium channel Kv1.1/KCNA1 (Ki=75 pM), KcsA (Ki~1 nM) and moderately blocks Kv1.2/KCNA2 (Ki=2.5 nM) and Kv1.3/KCNA3 (Ki=3.1 nM). Also facilitates acetylcholine release at the avian neuromuscular junction. Blockade and dissociation rate are sensitive to voltage. This is Kappa-stichotoxin-Hmg1a from Heteractis magnifica (Magnificent sea anemone).